The following is a 478-amino-acid chain: 3-isopropylmalate dehydratase large subunit (478 aa).

The [4Fe-4S] cluster site is built by Cys-355, Cys-415, and Cys-418.

This sequence belongs to the aconitase/IPM isomerase family. LeuC type 1 subfamily. As to quaternary structure, heterodimer of LeuC and LeuD. [4Fe-4S] cluster serves as cofactor.

It catalyses the reaction (2R,3S)-3-isopropylmalate = (2S)-2-isopropylmalate. It participates in amino-acid biosynthesis; L-leucine biosynthesis; L-leucine from 3-methyl-2-oxobutanoate: step 2/4. Catalyzes the isomerization between 2-isopropylmalate and 3-isopropylmalate, via the formation of 2-isopropylmaleate. This Paracoccus denitrificans (strain Pd 1222) protein is 3-isopropylmalate dehydratase large subunit.